The following is a 663-amino-acid chain: Rho GTPase-activating protein 18 (663 aa).

Disordered stretches follow at residues 14-73 and 85-106; these read AYHP…DESM and RSNE…DEGE. The span at 27–37 shows a compositional bias: basic and acidic residues; the sequence is SHVKGGDEATS. A compositionally biased stretch (polar residues) spans 38–51; sequence SRRYGQYTINQEGS. Serine 65 and serine 68 each carry phosphoserine. Basic and acidic residues predominate over residues 85-102; the sequence is RSNENRQEGQEAIVVKEP. At threonine 156 the chain carries Phosphothreonine. Disordered regions lie at residues 173–228 and 245–277; these read FAQQ…PASE and KEFS…TRIG. Composition is skewed to basic and acidic residues over residues 178-205 and 212-222; these read EAQE…KDDQ and DSKEQISRVPE. A phosphoserine mark is found at serine 260 and serine 263. Residues 324–523 enclose the Rho-GAP domain; sequence IPLTILLEQD…LLIRYQKILW (200 aa). Residue serine 610 is modified to Phosphoserine.

Interacts with MPHOSPH6. As to expression, widely expressed: expressed in most organs, except small intestine.

It localises to the cytoplasm. Rho GTPase activating protein that suppresses F-actin polymerization by inhibiting Rho. Rho GTPase activating proteins act by converting Rho-type GTPases to an inactive GDP-bound state. Plays a key role in tissue tension and 3D tissue shape by regulating cortical actomyosin network formation. Acts downstream of YAP1 and inhibits actin polymerization, which in turn reduces nuclear localization of YAP1. Regulates cell shape, spreading, and migration. In Mus musculus (Mouse), this protein is Rho GTPase-activating protein 18.